The following is a 156-amino-acid chain: MILTSFMLMMIATTFTLYLASTPIVLGVNILMMALLLASTFASFMSSWFAFLIFLIYIGGMLVMFAYFLALTPNQQISNFNIMPYALITLLTFSALTYTTNIKIPTFSDISQGNSILYMSSTAPFLILLALILLLTMVIVVKLTSRSSGPLRPFSP.

The next 5 membrane-spanning stretches (helical) occupy residues 1-21 (MILT…YLAS), 24-44 (IVLG…FASF), 49-69 (FAFL…AYFL), 77-97 (ISNF…SALT), and 121-141 (STAP…VIVV).

It belongs to the complex I subunit 6 family.

The protein localises to the mitochondrion membrane. It carries out the reaction a ubiquinone + NADH + 5 H(+)(in) = a ubiquinol + NAD(+) + 4 H(+)(out). Functionally, core subunit of the mitochondrial membrane respiratory chain NADH dehydrogenase (Complex I) that is believed to belong to the minimal assembly required for catalysis. Complex I functions in the transfer of electrons from NADH to the respiratory chain. The immediate electron acceptor for the enzyme is believed to be ubiquinone. The sequence is that of NADH-ubiquinone oxidoreductase chain 6 (ND6) from Lumbricus terrestris (Common earthworm).